A 90-amino-acid polypeptide reads, in one-letter code: Probable Fe(2+)-trafficking protein (90 aa).

This sequence belongs to the Fe(2+)-trafficking protein family.

Functionally, could be a mediator in iron transactions between iron acquisition and iron-requiring processes, such as synthesis and/or repair of Fe-S clusters in biosynthetic enzymes. The chain is Probable Fe(2+)-trafficking protein from Hydrogenovibrio crunogenus (strain DSM 25203 / XCL-2) (Thiomicrospira crunogena).